The sequence spans 408 residues: Imidazolonepropionase (408 aa).

Fe(3+)-binding residues include His-73 and His-75. Zn(2+)-binding residues include His-73 and His-75. Residues Arg-82, Tyr-145, and His-178 each coordinate 4-imidazolone-5-propanoate. Tyr-145 is a binding site for N-formimidoyl-L-glutamate. His-243 serves as a coordination point for Fe(3+). His-243 contributes to the Zn(2+) binding site. Gln-246 is a binding site for 4-imidazolone-5-propanoate. A Fe(3+)-binding site is contributed by Asp-318. Zn(2+) is bound at residue Asp-318. 2 residues coordinate N-formimidoyl-L-glutamate: Asn-320 and Gly-322. Ser-323 is a binding site for 4-imidazolone-5-propanoate.

It belongs to the metallo-dependent hydrolases superfamily. HutI family. The cofactor is Zn(2+). Fe(3+) is required as a cofactor.

The protein resides in the cytoplasm. The catalysed reaction is 4-imidazolone-5-propanoate + H2O = N-formimidoyl-L-glutamate. Its pathway is amino-acid degradation; L-histidine degradation into L-glutamate; N-formimidoyl-L-glutamate from L-histidine: step 3/3. Catalyzes the hydrolytic cleavage of the carbon-nitrogen bond in imidazolone-5-propanoate to yield N-formimidoyl-L-glutamate. It is the third step in the universal histidine degradation pathway. The polypeptide is Imidazolonepropionase (Shewanella baltica (strain OS195)).